The primary structure comprises 218 residues: Uracil-DNA glycosylase (218 aa).

Asp68 serves as the catalytic Proton acceptor.

The protein belongs to the uracil-DNA glycosylase (UDG) superfamily. UNG family. In terms of assembly, homodimer. Interacts with protein OPG148. Component of the Uracil-DNA glycosylase(UDG)-OPG148-polymerase complex; OPG148 and UDG form a heterodimeric processivity factor that associates with OPG71 to form the processive polymerase holoenzyme.

It carries out the reaction Hydrolyzes single-stranded DNA or mismatched double-stranded DNA and polynucleotides, releasing free uracil.. Functionally, plays an essential role in viral replication as a component of the DNA polymerase processivity factor. Excises uracil residues from the DNA which can arise as a result of misincorporation of dUMP residues by DNA polymerase or due to deamination of cytosine. This Homo sapiens (Human) protein is Uracil-DNA glycosylase (OPG116).